The sequence spans 94 residues: Cell division protein FtsB (94 aa).

Topologically, residues 1–3 (MRT) are cytoplasmic. A helical transmembrane segment spans residues 4 to 21 (FAIFLLIALGWLQYTLWF). Residues 22–94 (GKNGMSDYAQ…YRIIDENSEG (73 aa)) are Periplasmic-facing. Residues 33-71 (SNDVALQEEVNQGLRNRNEQMFAEIDDLKKGSEAIEERA) are a coiled coil.

Belongs to the FtsB family. Part of a complex composed of FtsB, FtsL and FtsQ.

Its subcellular location is the cell inner membrane. Functionally, essential cell division protein. May link together the upstream cell division proteins, which are predominantly cytoplasmic, with the downstream cell division proteins, which are predominantly periplasmic. In Aliivibrio fischeri (strain ATCC 700601 / ES114) (Vibrio fischeri), this protein is Cell division protein FtsB.